We begin with the raw amino-acid sequence, 273 residues long: Large ribosomal subunit protein uL2 (273 aa).

Residues 221-262 (RGTAMNPVDHPHGGGEGRNFGKHPVTPWGVQTKGKKTRHNKR) are disordered. Basic residues predominate over residues 253–262 (KGKKTRHNKR).

It belongs to the universal ribosomal protein uL2 family. Part of the 50S ribosomal subunit. Forms a bridge to the 30S subunit in the 70S ribosome.

In terms of biological role, one of the primary rRNA binding proteins. Required for association of the 30S and 50S subunits to form the 70S ribosome, for tRNA binding and peptide bond formation. It has been suggested to have peptidyltransferase activity; this is somewhat controversial. Makes several contacts with the 16S rRNA in the 70S ribosome. This Haemophilus ducreyi (strain 35000HP / ATCC 700724) protein is Large ribosomal subunit protein uL2.